The sequence spans 285 residues: Eukaryotic translation initiation factor 2 subunit beta (285 aa).

Positions 30 to 69 (DAAVNGKENGSGDDLFAGLKKKKKKSKSVSADAEAEKEPT) are disordered. Residue Ser-40 is modified to Phosphoserine. Phosphothreonine is present on Thr-69. A phosphoserine mark is found at Ser-80, Ser-92, and Ser-112. Position 116 is a phosphothreonine (Thr-116). At Ser-118 the chain carries Phosphoserine. The segment at 236–262 (CKTCKSINTELKREQSNRLFFMVCKSC) adopts a C4-type zinc-finger fold.

Belongs to the eIF-2-beta/eIF-5 family. In terms of assembly, eukaryotic translation initiation factor 2 eIF2 is a heterotrimeric complex composed of an alpha, a beta and a gamma subunit. The factors eIF-1, eIF-2, eIF-3, TIF5/eIF-5 and methionyl-tRNAi form a multifactor complex (MFC) that may bind to the 40S ribosome. Interacts with GCD6. Interacts with GCD1. Interacts with TIF5/eIF-5. Interacts with CDC123.

Its subcellular location is the cytoplasm. It localises to the cytosol. Component of the eIF2 complex that functions in the early steps of protein synthesis by forming a ternary complex with GTP and initiator tRNA. This complex binds to a 40S ribosomal subunit, followed by mRNA binding to form a 43S pre-initiation complex (43S PIC). Junction of the 60S ribosomal subunit to form the 80S initiation complex is preceded by hydrolysis of the GTP bound to eIF2 and release of an eIF2-GDP binary complex. In order for eIF2 to recycle and catalyze another round of initiation, the GDP bound to eIF2 must exchange with GTP by way of a reaction catalyzed by eIF2B. This Saccharomyces cerevisiae (strain ATCC 204508 / S288c) (Baker's yeast) protein is Eukaryotic translation initiation factor 2 subunit beta (SUI3).